Consider the following 620-residue polypeptide: Glutathione-regulated potassium-efflux system protein KefC (620 aa).

Over 1–3 the chain is Periplasmic; the sequence is MDS. A helical transmembrane segment spans residues 4 to 24; the sequence is HTLVQALIYLGSAALIVPIAV. Arginine 25 is a topological domain (cytoplasmic). A helical transmembrane segment spans residues 26–46; the sequence is LGLGSVLGYLIAGCIIGPWGL. The Periplasmic segment spans residues 47 to 53; that stretch reads RLVTDAE. A helical membrane pass occupies residues 54–74; it reads SILHFAEIGVVLMLFIIGLEL. The Cytoplasmic portion of the chain corresponds to 75–89; the sequence is DPQRLWKLRAAVFGG. The chain crosses the membrane as a helical span at residues 90-110; it reads GALQMVICGGLLGLFCMLLGL. Residues 111-113 are Periplasmic-facing; the sequence is RWQ. The chain crosses the membrane as a helical span at residues 114–134; it reads VAELIGMTLALSSTAIAMQAM. Topologically, residues 135-148 are cytoplasmic; sequence NERNLMVTQMGRSA. A helical membrane pass occupies residues 149–169; sequence FAVLLFQDIAAIPLVAMIPLL. Residues 170-177 are Periplasmic-facing; the sequence is AASSASTT. Residues 178 to 198 form a helical membrane-spanning segment; sequence MGAFALSALKVAGALVLVVLL. Topologically, residues 199–213 are cytoplasmic; sequence GRYVTRPALRFVARS. A helical transmembrane segment spans residues 214–233; the sequence is GLREVFSAVALFLVFGFGLL. At 234 to 236 the chain is on the periplasmic side; sequence LEE. Residues 237–254 traverse the membrane as a helical segment; it reads VGLSMAMGAFLAGVLLAS. Residues 255–269 lie on the Cytoplasmic side of the membrane; it reads SEYRHALESDIEPFK. A helical membrane pass occupies residues 270-290; the sequence is GLLLGLFFIGVGMSIDFGTLI. At 291-293 the chain is on the periplasmic side; the sequence is ENP. The chain crosses the membrane as a helical span at residues 294-314; the sequence is LRIVILLLGFLIIKIAMLWLI. At 315–326 the chain is on the cytoplasmic side; sequence ARPLQVPNKQRR. A helical membrane pass occupies residues 327–347; that stretch reads WFAVLLGQGSEFAFVVFGAAQ. Over 348-358 the chain is Periplasmic; sequence MANVLEPEWAK. A helical membrane pass occupies residues 359-379; the sequence is SLTLAVALSMAATPILLVILN. Residues 380–620 lie on the Cytoplasmic side of the membrane; sequence RLEQSSTEEA…ADEPETKPSS (241 aa). Residues 399 to 518 form the RCK N-terminal domain; it reads QPRVIIAGFG…AGVEKPERET (120 aa). The segment at 597–620 is disordered; that stretch reads GWQGTEEGKHTGNMADEPETKPSS.

Belongs to the monovalent cation:proton antiporter 2 (CPA2) transporter (TC 2.A.37) family. KefC subfamily. In terms of assembly, homodimer. Interacts with the regulatory subunit KefF.

It is found in the cell inner membrane. Functionally, pore-forming subunit of a potassium efflux system that confers protection against electrophiles. Catalyzes K(+)/H(+) antiport. The chain is Glutathione-regulated potassium-efflux system protein KefC from Escherichia coli O157:H7.